The primary structure comprises 637 residues: Sodium-dependent proline transporter (637 aa).

Residues 1 to 45 are Cytoplasmic-facing; sequence MKKLQEAHLRKPITPDLLMTPSDQGDVDLDVDFAADRGNWTGKLD. Threonine 20 is subject to Phosphothreonine. Residue serine 22 is modified to Phosphoserine. The next 3 membrane-spanning stretches (helical) occupy residues 46-66, 74-93, and 117-137; these read FLLS…FPYR, AFLV…LFFL, and GAGA…NMII. At 138-214 the chain is on the extracellular side; that stretch reads AYVLFYLFAS…QGIGRPGEIR (77 aa). Asparagine 182 carries N-linked (GlcNAc...) asparagine glycosylation. 9 helical membrane passes run 215 to 233, 242 to 259, 295 to 312, 324 to 345, 378 to 397, 425 to 443, 459 to 479, 500 to 519, and 538 to 556; these read WNLC…LCIL, VVYF…MLLV, IFYS…FASY, FIVT…FSVL, LPLS…TLGL, VFSG…ILTT, SFGL…VYGI, ACWL…YSIV, and LGIL…GMLV. At 557-637 the chain is on the cytoplasmic side; sequence AVLREEGSLW…IAEEEEESMM (81 aa). A phosphoserine mark is found at serine 573 and serine 582. Threonine 588 is modified (phosphothreonine). Tyrosine 591 bears the Phosphotyrosine mark. Residues serine 598 and serine 600 each carry the phosphoserine modification.

Belongs to the sodium:neurotransmitter symporter (SNF) (TC 2.A.22) family. SLC6A7 subfamily.

Its subcellular location is the synaptic cell membrane. It carries out the reaction L-proline(out) + chloride(out) + 2 Na(+)(out) = L-proline(in) + chloride(in) + 2 Na(+)(in). It catalyses the reaction L-pipecolate(out) + chloride(out) + 2 Na(+)(out) = L-pipecolate(in) + chloride(in) + 2 Na(+)(in). Brain specific sodium (and chloride)-dependent proline transporter. Terminates the action of proline by its high affinity sodium-dependent reuptake into presynaptic terminals. The protein is Sodium-dependent proline transporter of Mus musculus (Mouse).